Consider the following 361-residue polypeptide: Transcription factor Sox-18B (361 aa).

The interval 17 to 65 (VNSTWVPPADTVPEASLTPHSPPAPDSPAPSPKPGYGYSACEEKPGDPR) is disordered. The span at 36-49 (HSPPAPDSPAPSPK) shows a compositional bias: pro residues. The segment at residues 66–134 (IRRPMNAFMV…QHLQDHPNYK (69 aa)) is a DNA-binding region (HMG box). Interaction with DNA stretches follow at residues 68-81 (RPMN…KDER) and 92-104 (HNAV…GQSW). The segment at 127–163 (LQDHPNYKYRPRRKKQAKKLKRMDPSHHLRNEGYTGG) is disordered. Basic residues predominate over residues 133 to 147 (YKYRPRRKKQAKKLK). The segment at 147-208 (KRMDPSHHLR…VLEPSEPAFF (62 aa)) is important for transcriptional activation. Over residues 148 to 157 (RMDPSHHLRN) the composition is skewed to basic and acidic residues. Positions 234–360 (KTLREISLPY…TAMYYTPCIT (127 aa)) constitute a Sox C-terminal domain. The short motif at 306-314 (NEFDQYLNM) is the 9aaTAD element.

Expressed in the adult spleen, lung, heart and kidney, and at a lower level in the adult testis, liver and brain.

It localises to the nucleus. Functionally, transcription factor. Binds to the consensus DNA sequence 5'-AACAAT-3'. Also binds 5'-CACAAT-3' and 5'-AATAAT-3' but with a lower affinity. Acts partially redundantly with sox7 during cardiogenesis, acting indirectly through nodal-signaling to induce mesodermal, organizer and endodermal tissues, which then interact to initiate cardiogenesis. Also acts as an antagonist of beta-catenin signaling. The protein is Transcription factor Sox-18B (sox18-b) of Xenopus laevis (African clawed frog).